Reading from the N-terminus, the 129-residue chain is Integration host factor subunit alpha (129 aa).

The interval 87-129 (SALNGEAPPEDHAEIDAREEAAADAAEARGEDFDEEGMEDMEG) is disordered. Over residues 95-117 (PEDHAEIDAREEAAADAAEARGE) the composition is skewed to basic and acidic residues. The span at 118 to 129 (DFDEEGMEDMEG) shows a compositional bias: acidic residues.

The protein belongs to the bacterial histone-like protein family. In terms of assembly, heterodimer of an alpha and a beta chain.

This protein is one of the two subunits of integration host factor, a specific DNA-binding protein that functions in genetic recombination as well as in transcriptional and translational control. It is necessary for normal cell growth and the production of carotenoids in response to light. In Myxococcus xanthus, this protein is Integration host factor subunit alpha (ihfA).